We begin with the raw amino-acid sequence, 121 residues long: Dihydroneopterin aldolase (121 aa).

Substrate-binding positions include glutamate 22, tyrosine 54, and 73-74 (LE). The Proton donor/acceptor role is filled by lysine 100.

This sequence belongs to the DHNA family. In terms of assembly, homooctamer. Four molecules assemble into a ring, and two rings come together to give a cylinder with a hole of at least 13 a diameter.

The catalysed reaction is 7,8-dihydroneopterin = 6-hydroxymethyl-7,8-dihydropterin + glycolaldehyde. It catalyses the reaction 7,8-dihydroneopterin = 7,8-dihydromonapterin. It functions in the pathway cofactor biosynthesis; tetrahydrofolate biosynthesis; 2-amino-4-hydroxy-6-hydroxymethyl-7,8-dihydropteridine diphosphate from 7,8-dihydroneopterin triphosphate: step 3/4. In terms of biological role, catalyzes the conversion of 7,8-dihydroneopterin to 6-hydroxymethyl-7,8-dihydropterin. Can also catalyze the epimerization of carbon 2' of dihydroneopterin to dihydromonapterin. The chain is Dihydroneopterin aldolase (folB) from Staphylococcus aureus (strain COL).